Reading from the N-terminus, the 380-residue chain is Cytochrome b (380 aa).

The next 4 helical transmembrane spans lie at 34–54 (FGSL…LLAM), 78–99 (WLIR…YLHI), 114–134 (WNTG…GYVL), and 179–199 (FFAL…IHLT). H84 and H98 together coordinate heme b. Residues H183 and H197 each coordinate heme b. A ubiquinone is bound at residue H202. 4 helical membrane-spanning segments follow: residues 227–247 (LKDL…ALFT), 289–309 (LGGV…PFLH), 321–341 (LSQL…WVGS), and 348–368 (FIII…VLLP).

It belongs to the cytochrome b family. As to quaternary structure, the cytochrome bc1 complex contains 11 subunits: 3 respiratory subunits (MT-CYB, CYC1 and UQCRFS1), 2 core proteins (UQCRC1 and UQCRC2) and 6 low-molecular weight proteins (UQCRH/QCR6, UQCRB/QCR7, UQCRQ/QCR8, UQCR10/QCR9, UQCR11/QCR10 and a cleavage product of UQCRFS1). This cytochrome bc1 complex then forms a dimer. Heme b is required as a cofactor.

The protein localises to the mitochondrion inner membrane. In terms of biological role, component of the ubiquinol-cytochrome c reductase complex (complex III or cytochrome b-c1 complex) that is part of the mitochondrial respiratory chain. The b-c1 complex mediates electron transfer from ubiquinol to cytochrome c. Contributes to the generation of a proton gradient across the mitochondrial membrane that is then used for ATP synthesis. This Herpetotheres cachinnans (Laughing falcon) protein is Cytochrome b (MT-CYB).